A 24-amino-acid polypeptide reads, in one-letter code: Waglerin-4 (24 aa).

Cysteine 11 and cysteine 15 are oxidised to a cystine.

Belongs to the waglerin family. As to quaternary structure, monomer. As to expression, expressed by the venom gland.

The protein localises to the secreted. Waglerin-2 selectively blocks the epsilon subunit of muscle nicotinic acetylcholine receptor (nAChR). Also has effects on rodent ionotropic GABA(A) receptors (GABR), since it potentiates I(GABA) in some neurons and depresses I(GABA) in others. In mice, it elicits tachypnea, ocular proptosis, rapid collapse and spasms, whereas no toxic effects on respiration and blood pressure are observed in rats. Functionally, waglerin-4 selectively blocks the epsilon subunit of muscle nicotinic acetylcholine receptor. It elicits tachypnea, ocular proptosis, rapid collapse and spasms in mice. It causes death by respiratory failure. This Tropidolaemus wagleri (Wagler's pit viper) protein is Waglerin-4.